Reading from the N-terminus, the 488-residue chain is MSFNHHTIEELHELLVAKDISAVELTKATLEDIKAREEAVGSFITIACEAALKQAAALDAKGIDPDNVMSGIPLAVKDNISTKGILTTAASKMLYNYEPIFDATAVANAYDKDMIVIGKTNMDEFAMGGSTETSYFKKTKNAWDHSRVPGGSSGGSATAVASGQVRLSLGSDTGGSIRQPAAFNGVVGLKPTYGAVSRYGLIAFGSSLDQIGPFAPTVRENAQLLSVIAGSDRKDSTSAPVQIADYTSKIGQDIKGMKIALPKEYLGEGIDPKIKETILAAAQHFEKLGAIIEEVSLPHSKYGVAVYYIIASSEASSNLQRFDGIRYGFRAADAKSLEDIYVKTRSQGFGDEVKRRIMLGTFSLSSGYYDAYFKKAGQVRTLIIQDFEKVFADYDLILGPTAPTAAFELDTLNHDPVAMYLADILTIPVNLAGLPAISIPAGFADGLPVGLQLIGPKYSEEVIYQVAAAFEATTDYHKQQPMIFGGDR.

Residues K77 and S152 each act as charge relay system in the active site. The Acyl-ester intermediate role is filled by S176.

Belongs to the amidase family. GatA subfamily. In terms of assembly, heterotrimer of A, B and C subunits.

The enzyme catalyses L-glutamyl-tRNA(Gln) + L-glutamine + ATP + H2O = L-glutaminyl-tRNA(Gln) + L-glutamate + ADP + phosphate + H(+). Its function is as follows. Allows the formation of correctly charged Gln-tRNA(Gln) through the transamidation of misacylated Glu-tRNA(Gln) in organisms which lack glutaminyl-tRNA synthetase. The reaction takes place in the presence of glutamine and ATP through an activated gamma-phospho-Glu-tRNA(Gln). This is Glutamyl-tRNA(Gln) amidotransferase subunit A from Streptococcus equi subsp. zooepidemicus (strain H70).